The chain runs to 203 residues: MSEGHIAAISKTNKRKNRRKKRRTQDVSDSSSDSSSDSENSSVEDNDTKLETVEKAASDVEDVTLSDIDMDKEEDEAALDDKKASRKEGSVLSSETVDKLNKVGLTTSDLTGNNGIHLGNIDLNKMSATLDESSNKLLENNKDKNGLKNQYLSMLFESYGDDMNELRNAPDFTSKTLVMLANVLKDGGDMFDLETLKTIVEDK.

Residues 1–90 (MSEGHIAAIS…DKKASRKEGS (90 aa)) form a disordered region. A compositionally biased stretch (basic residues) spans 12 to 23 (TNKRKNRRKKRR). Low complexity predominate over residues 27–43 (VSDSSSDSSSDSENSSV). Positions 46–58 (NDTKLETVEKAAS) are enriched in basic and acidic residues. Residues 59-78 (DVEDVTLSDIDMDKEEDEAA) show a composition bias toward acidic residues. Residues 79 to 89 (LDDKKASRKEG) show a composition bias toward basic and acidic residues.

This sequence belongs to the RSA3 family. As to quaternary structure, associates with nucleolar pre-ribosomal particles.

It is found in the nucleus. Its subcellular location is the nucleolus. Its function is as follows. Required for efficient biogenesis of the 60S ribosomal subunit. This is Ribosome assembly protein 3 (RSA3) from Kluyveromyces lactis (strain ATCC 8585 / CBS 2359 / DSM 70799 / NBRC 1267 / NRRL Y-1140 / WM37) (Yeast).